The sequence spans 29 residues: Cytochrome b6-f complex subunit 8 (29 aa).

The helical transmembrane segment at 3–23 (IVSIGWAALMVVFTFSLSLVV) threads the bilayer.

The protein belongs to the PetN family. As to quaternary structure, the 4 large subunits of the cytochrome b6-f complex are cytochrome b6, subunit IV (17 kDa polypeptide, PetD), cytochrome f and the Rieske protein, while the 4 small subunits are PetG, PetL, PetM and PetN. The complex functions as a dimer.

It localises to the plastid. Its subcellular location is the chloroplast thylakoid membrane. Its function is as follows. Component of the cytochrome b6-f complex, which mediates electron transfer between photosystem II (PSII) and photosystem I (PSI), cyclic electron flow around PSI, and state transitions. The polypeptide is Cytochrome b6-f complex subunit 8 (Zygnema circumcarinatum (Green alga)).